The following is a 290-amino-acid chain: Membrane protein insertase YidC (290 aa).

An N-terminal signal peptide occupies residues 1-19 (MKKKTLLPLFLGIMVFLAG). A lipid anchor (N-palmitoyl cysteine) is attached at C20. C20 is lipidated: S-diacylglycerol cysteine. Transmembrane regions (helical) follow at residues 56 to 76 (YGLA…PFML), 134 to 154 (MLGC…YFVL), 176 to 196 (PDIW…YVSS), 207 to 224 (GYMM…ISLS), and 229 to 251 (LGLY…NIYY). The interval 270–290 (HNGGSNKKGKNTQVVSKKKKK) is disordered.

Belongs to the OXA1/ALB3/YidC family. Type 2 subfamily.

The protein resides in the cell membrane. In terms of biological role, required for the insertion and/or proper folding and/or complex formation of integral membrane proteins into the membrane. Involved in integration of membrane proteins that insert both dependently and independently of the Sec translocase complex, as well as at least some lipoproteins. This is Membrane protein insertase YidC from Staphylococcus aureus (strain MRSA252).